The chain runs to 1112 residues: DNA polymerase II large subunit (1112 aa).

This sequence belongs to the archaeal DNA polymerase II family. In terms of assembly, heterodimer of a large subunit and a small subunit.

The enzyme catalyses DNA(n) + a 2'-deoxyribonucleoside 5'-triphosphate = DNA(n+1) + diphosphate. The catalysed reaction is Exonucleolytic cleavage in the 3'- to 5'-direction to yield nucleoside 5'-phosphates.. Possesses two activities: a DNA synthesis (polymerase) and an exonucleolytic activity that degrades single-stranded DNA in the 3'- to 5'-direction. Has a template-primer preference which is characteristic of a replicative DNA polymerase. This is DNA polymerase II large subunit from Cenarchaeum symbiosum (strain A).